The primary structure comprises 616 residues: 2-[(L-alanin-3-ylcarbamoyl)methyl]-3-(2-aminoethylcarbamoyl)-2-hydroxypropanoate synthase (616 aa).

The protein belongs to the IucA/IucC family. As to quaternary structure, forms a mixture of monomer and dimer in solution.

It carries out the reaction 2-[(2-aminoethylcarbamoyl)methyl]-2-hydroxybutanedioate + (S)-2,3-diaminopropanoate + ATP = 2-[(L-alanin-3-ylcarbamoyl)methyl]-3-(2-aminoethylcarbamoyl)-2-hydroxypropanoate + AMP + diphosphate. It functions in the pathway siderophore biosynthesis. In terms of biological role, catalyzes the condensation of L-2,3-diaminopropionic acid (L-Dap) and citryl-diaminoethane to form L-2,3-diaminopropionyl-citryl-diaminoethane, the third step in staphyloferrin B biosynthesis. In Staphylococcus aureus (strain NCTC 8325 / PS 47), this protein is 2-[(L-alanin-3-ylcarbamoyl)methyl]-3-(2-aminoethylcarbamoyl)-2-hydroxypropanoate synthase.